The chain runs to 139 residues: Thioredoxin H-type (139 aa).

In terms of domain architecture, Thioredoxin spans 20–132 (ELAGGNVHLI…LHKKITAILD (113 aa)). Residues cysteine 58 and cysteine 61 each act as nucleophile in the active site. A disulfide bond links cysteine 58 and cysteine 61.

Its subcellular location is the cytoplasm. Functionally, participates in various redox reactions through the reversible oxidation of the active center dithiol to a disulfide. The H form is known to activate a number of cytosolic enzymes. This is Thioredoxin H-type from Populus jackii (Balm of Gilead).